The primary structure comprises 476 residues: Sulfate adenylyltransferase subunit 1 (476 aa).

The 216-residue stretch at 24–239 (KSMLRFLTCG…VLENVDIDQK (216 aa)) folds into the tr-type G domain. Positions 33–40 (GSVDDGKS) are G1. Residue 33–40 (GSVDDGKS) participates in GTP binding. The interval 91-95 (GITID) is G2. The segment at 112 to 115 (DTPG) is G3. GTP-binding positions include 112–116 (DTPGH) and 167–170 (NKMD). The tract at residues 167-170 (NKMD) is G4. Positions 205–207 (SAL) are G5.

This sequence belongs to the TRAFAC class translation factor GTPase superfamily. Classic translation factor GTPase family. CysN/NodQ subfamily. Heterodimer composed of CysD, the smaller subunit, and CysN.

The catalysed reaction is sulfate + ATP + H(+) = adenosine 5'-phosphosulfate + diphosphate. It functions in the pathway sulfur metabolism; hydrogen sulfide biosynthesis; sulfite from sulfate: step 1/3. Its function is as follows. With CysD forms the ATP sulfurylase (ATPS) that catalyzes the adenylation of sulfate producing adenosine 5'-phosphosulfate (APS) and diphosphate, the first enzymatic step in sulfur assimilation pathway. APS synthesis involves the formation of a high-energy phosphoric-sulfuric acid anhydride bond driven by GTP hydrolysis by CysN coupled to ATP hydrolysis by CysD. The polypeptide is Sulfate adenylyltransferase subunit 1 (Vibrio atlanticus (strain LGP32) (Vibrio splendidus (strain Mel32))).